The primary structure comprises 67 residues: Large ribosomal subunit protein bL35 (67 aa).

It belongs to the bacterial ribosomal protein bL35 family.

This is Large ribosomal subunit protein bL35 from Bartonella quintana (strain Toulouse) (Rochalimaea quintana).